Reading from the N-terminus, the 445-residue chain is Acyl-lipid (7-3)-desaturase (445 aa).

The Cytochrome b5 heme-binding domain occupies 11–91; that stretch reads VAELRAAEVA…MSKFFVGSLD (81 aa). His50 and His73 together coordinate heme. 2 helical membrane-spanning segments follow: residues 126–146 and 148–168; these read YWLKAAALVVAAVSIEGYMLL and GKTLLLSVFLGLVFAWIGLNI. The short motif at 170–174 is the Histidine box-1 element; sequence HDANH. A Histidine box-2 motif is present at residues 205–210; sequence HVVMHH. A run of 3 helical transmembrane segments spans residues 247-267, 283-303, and 312-332; these read ILPGEAMYAFKLLFLDALELL, LFAPAVACKLGFWARFVALPL, and ALCICATVCTGSFYLAFFFFI. Positions 380–384 match the Histidine box-3 motif; that stretch reads QIEHH.

The protein belongs to the fatty acid desaturase type 1 family. Requires Fe(2+) as cofactor.

The protein localises to the membrane. The catalysed reaction is a (7Z,10Z,13Z,16Z,19Z)-docosapentaenoyl-containing glycerolipid + 2 Fe(II)-[cytochrome b5] + O2 + 2 H(+) = a (4Z,7Z,10Z,13Z,16Z,19Z)-docosahexaenoyl-containing glycerolipid + 2 Fe(III)-[cytochrome b5] + 2 H2O. It catalyses the reaction a (7Z,10Z,13Z,16Z)-docosatetraenoyl-containing glycerolipid + 2 Fe(II)-[cytochrome b5] + O2 + 2 H(+) = a (4Z,7Z,10Z,13Z,16Z)-docosapentaenoyl-containing glycerolipid + 2 Fe(III)-[cytochrome b5] + 2 H2O. Its function is as follows. Fatty acid desaturase that introduces a cis double bond at the 4-position in 22-carbon polyunsaturated fatty acids that contain a Delta(7) double bond, resulting in the production of delta-4 desaturated fatty acid docosahexanoic acid (DHA). Mediates desaturation of 22:5n-3 and 22:4n-6 into 22:6n-3 and 22:5n-6 respectively. The chain is Acyl-lipid (7-3)-desaturase from Diacronema lutheri (Unicellular marine alga).